Here is a 190-residue protein sequence, read N- to C-terminus: Elongation factor P (190 aa).

It belongs to the elongation factor P family.

It is found in the cytoplasm. It participates in protein biosynthesis; polypeptide chain elongation. Involved in peptide bond synthesis. Stimulates efficient translation and peptide-bond synthesis on native or reconstituted 70S ribosomes in vitro. Probably functions indirectly by altering the affinity of the ribosome for aminoacyl-tRNA, thus increasing their reactivity as acceptors for peptidyl transferase. The chain is Elongation factor P from Persephonella marina (strain DSM 14350 / EX-H1).